Here is a 297-residue protein sequence, read N- to C-terminus: MLYQQISQNKRRTVILLFAFFVLLVVIGAAAGYLLADSYQLGAAFALIIGAIYAFSMIFQSTSLVMGMNKAKEITVNDAPDFFHIVEDMALVAQIPMPKVFIIDDPSLNAFATGSSPQNAAVAATTGLLKVMNREELEAVIGHEVSHIRNYDIRISTIAVALASAVTLISSIGGRMMWYSGGRRRDDDRNDNGFGAIMLIFSILSLILAPLAASLVQLAISRQREYLADASSVELTRNPEGMIRALQKLSNSQPMTHPVDDASAALYINEPRKKEKLSALFSTHPPIEDRIERLKHM.

The next 2 helical transmembrane spans lie at 14-34 (VILLFAFFVLLVVIGAAAGYL) and 39-59 (YQLGAAFALIIGAIYAFSMIF). Residue His-143 coordinates Zn(2+). Glu-144 is an active-site residue. His-147 provides a ligand contact to Zn(2+). 2 helical membrane passes run 158–178 (IAVALASAVTLISSIGGRMMW) and 193–213 (GFGAIMLIFSILSLILAPLAA). Glu-225 provides a ligand contact to Zn(2+).

This sequence belongs to the peptidase M48B family. Requires Zn(2+) as cofactor.

It is found in the cell membrane. This Streptococcus equi subsp. zooepidemicus (strain MGCS10565) protein is Protease HtpX homolog.